Consider the following 346-residue polypeptide: Biotin synthase (346 aa).

The Radical SAM core domain maps to 38 to 256 (RQVQVSTLLS…IAVARIMMPT (219 aa)). Residues cysteine 53, cysteine 57, and cysteine 60 each contribute to the [4Fe-4S] cluster site. 4 residues coordinate [2Fe-2S] cluster: cysteine 97, cysteine 128, cysteine 188, and arginine 260.

This sequence belongs to the radical SAM superfamily. Biotin synthase family. In terms of assembly, homodimer. [4Fe-4S] cluster is required as a cofactor. Requires [2Fe-2S] cluster as cofactor.

The enzyme catalyses (4R,5S)-dethiobiotin + (sulfur carrier)-SH + 2 reduced [2Fe-2S]-[ferredoxin] + 2 S-adenosyl-L-methionine = (sulfur carrier)-H + biotin + 2 5'-deoxyadenosine + 2 L-methionine + 2 oxidized [2Fe-2S]-[ferredoxin]. Its pathway is cofactor biosynthesis; biotin biosynthesis; biotin from 7,8-diaminononanoate: step 2/2. In terms of biological role, catalyzes the conversion of dethiobiotin (DTB) to biotin by the insertion of a sulfur atom into dethiobiotin via a radical-based mechanism. In Shigella boydii serotype 18 (strain CDC 3083-94 / BS512), this protein is Biotin synthase.